An 87-amino-acid polypeptide reads, in one-letter code: Small ribosomal subunit protein uS19 (87 aa).

This sequence belongs to the universal ribosomal protein uS19 family.

In terms of biological role, protein S19 forms a complex with S13 that binds strongly to the 16S ribosomal RNA. The polypeptide is Small ribosomal subunit protein uS19 (rpsS) (Mycoplasma genitalium (strain ATCC 33530 / DSM 19775 / NCTC 10195 / G37) (Mycoplasmoides genitalium)).